Consider the following 447-residue polypeptide: Rab GDP dissociation inhibitor alpha (447 aa).

A Phosphoserine modification is found at Ser-427.

The protein belongs to the Rab GDI family. Interacts with RHOH. Interacts with the non-phosphorylated forms of RAB1A, RAB3A, RAB5A, RAB5B, RAB5C, RAB8A, RAB8B, RAB10, RAB12, RAB35, and RAB43. In terms of tissue distribution, high expression in brain, lower in other tissues.

The protein localises to the cytoplasm. It is found in the golgi apparatus. It localises to the trans-Golgi network. Functionally, regulates the GDP/GTP exchange reaction of most Rab proteins by inhibiting the dissociation of GDP from them, and the subsequent binding of GTP to them. Promotes the dissociation of GDP-bound Rab proteins from the membrane and inhibits their activation. Promotes the dissociation of RAB1A, RAB3A, RAB5A and RAB10 from membranes. The polypeptide is Rab GDP dissociation inhibitor alpha (Gdi1) (Rattus norvegicus (Rat)).